Consider the following 912-residue polypeptide: Coiled-coil domain-containing protein 162 (912 aa).

Coiled coils occupy residues 1–35 (MFKS…FSFA) and 220–276 (VLLG…VVMS).

The protein is Coiled-coil domain-containing protein 162 of Mus musculus (Mouse).